The primary structure comprises 1362 residues: Integrator complex subunit 2 homolog (1362 aa).

A compositionally biased stretch (low complexity) spans M1–N10. 3 disordered regions span residues M1–S20, T629–N660, and N928–E963. Residues D945–E955 are compositionally biased toward basic and acidic residues.

The protein belongs to the Integrator subunit 2 family. As to quaternary structure, component of the Integrator complex. The core complex associates with protein phosphatase 2A subunits, to form the Integrator-PP2A (INTAC) complex.

The protein localises to the nucleus. Its subcellular location is the cytoplasm. Its function is as follows. Component of the integrator complex, a multiprotein complex that terminates RNA polymerase II (Pol II) transcription in the promoter-proximal region of genes. The integrator complex provides a quality checkpoint during transcription elongation by driving premature transcription termination of transcripts that are unfavorably configured for transcriptional elongation: the complex terminates transcription by (1) catalyzing dephosphorylation of the C-terminal domain (CTD) of Pol II subunit polr2a, (2) degrading the exiting nascent RNA transcript via endonuclease activity and (3) promoting the release of Pol II from bound DNA. The integrator complex is also involved in terminating the synthesis of non-coding Pol II transcripts, such as enhancer RNAs (eRNAs), small nuclear RNAs (snRNAs), telomerase RNAs and long non-coding RNAs (lncRNAs). The chain is Integrator complex subunit 2 homolog (ints2) from Dictyostelium discoideum (Social amoeba).